The following is a 234-amino-acid chain: uncharacterized protein (234 aa).

The segment at 1-23 (MVDQIRSPSWKSGFPSHQHQQGS) is disordered.

This is an uncharacterized protein from Caenorhabditis elegans.